Consider the following 650-residue polypeptide: 1-deoxy-D-xylulose-5-phosphate synthase (650 aa).

Basic and acidic residues predominate over residues 1–13 (MSKIKNDKRETGH). The disordered stretch occupies residues 1 to 23 (MSKIKNDKRETGHLKSPPETPLL). Thiamine diphosphate-binding positions include His92 and 133–135 (AHS). A Mg(2+)-binding site is contributed by Asp164. Residues 165–166 (GA), Asn193, Tyr302, and Glu384 each bind thiamine diphosphate. A Mg(2+)-binding site is contributed by Asn193.

Belongs to the transketolase family. DXPS subfamily. As to quaternary structure, homodimer. It depends on Mg(2+) as a cofactor. Thiamine diphosphate is required as a cofactor.

The enzyme catalyses D-glyceraldehyde 3-phosphate + pyruvate + H(+) = 1-deoxy-D-xylulose 5-phosphate + CO2. Its pathway is metabolic intermediate biosynthesis; 1-deoxy-D-xylulose 5-phosphate biosynthesis; 1-deoxy-D-xylulose 5-phosphate from D-glyceraldehyde 3-phosphate and pyruvate: step 1/1. Functionally, catalyzes the acyloin condensation reaction between C atoms 2 and 3 of pyruvate and glyceraldehyde 3-phosphate to yield 1-deoxy-D-xylulose-5-phosphate (DXP). The protein is 1-deoxy-D-xylulose-5-phosphate synthase of Chelativorans sp. (strain BNC1).